Reading from the N-terminus, the 180-residue chain is UPF0398 protein YpsA (180 aa).

The protein belongs to the UPF0398 family.

In Bacillus subtilis (strain 168), this protein is UPF0398 protein YpsA (ypsA).